Reading from the N-terminus, the 465-residue chain is G1/S-specific cyclin CLN3 (465 aa).

One can recognise a Cyclin N-terminal domain in the interval glutamate 44 to valine 171.

This sequence belongs to the cyclin family. In terms of assembly, interacts with CDC28 and SLA1. Hyperphosphorylated. GRR1 preferentially mediates the degradation of hyperphosphorylated CLN3.

G1/S-specific cyclin essential for the control of the cell cycle at the G1/S (start) transition. CLN3 may be an upstream activator of the G1 cyclins which directly catalyze start. Required for budding and for cell cycle progression and morphogenesis in environment-induced hyphae. Degradation is mediated by GRR1. Through binding to CDC28, controls the phosphorylation of SLA1 which regulates cortical actin patch dynamics. The sequence is that of G1/S-specific cyclin CLN3 (CLN3) from Candida albicans (strain SC5314 / ATCC MYA-2876) (Yeast).